The sequence spans 285 residues: Acetyl-coenzyme A carboxylase carboxyl transferase subunit beta (285 aa).

One can recognise a CoA carboxyltransferase N-terminal domain in the interval 22–285 (LWTKCEACGA…HPGVAYAPGV (264 aa)). Residues C26, C29, C45, and C48 each contribute to the Zn(2+) site. Residues 26 to 48 (CEACGAQIYKKEFQENLHVCPKC) form a C4-type zinc finger.

Belongs to the AccD/PCCB family. In terms of assembly, acetyl-CoA carboxylase is a heterohexamer composed of biotin carboxyl carrier protein (AccB), biotin carboxylase (AccC) and two subunits each of ACCase subunit alpha (AccA) and ACCase subunit beta (AccD). Zn(2+) is required as a cofactor.

The protein resides in the cytoplasm. The catalysed reaction is N(6)-carboxybiotinyl-L-lysyl-[protein] + acetyl-CoA = N(6)-biotinyl-L-lysyl-[protein] + malonyl-CoA. Its pathway is lipid metabolism; malonyl-CoA biosynthesis; malonyl-CoA from acetyl-CoA: step 1/1. Functionally, component of the acetyl coenzyme A carboxylase (ACC) complex. Biotin carboxylase (BC) catalyzes the carboxylation of biotin on its carrier protein (BCCP) and then the CO(2) group is transferred by the transcarboxylase to acetyl-CoA to form malonyl-CoA. The chain is Acetyl-coenzyme A carboxylase carboxyl transferase subunit beta from Thermus thermophilus (strain ATCC BAA-163 / DSM 7039 / HB27).